A 355-amino-acid chain; its full sequence is Guanine nucleotide-binding protein subunit alpha-14 (355 aa).

The G-alpha domain maps to 34–355 (RELKLLLLGT…QLNLREFNLV (322 aa)). The segment at 37-50 (KLLLLGTGESGKST) is G1 motif. GTP contacts are provided by residues 42 to 49 (GTGESGKS), 176 to 182 (LRVRVPT), 201 to 205 (DVGGQ), 270 to 273 (NKKD), and alanine 327. Serine 49 lines the Mg(2+) pocket. The tract at residues 174 to 182 (DVLRVRVPT) is G2 motif. At arginine 179 the chain carries ADP-ribosylarginine; by cholera toxin. A Mg(2+)-binding site is contributed by threonine 182. Positions 197 to 206 (FRMVDVGGQR) are G3 motif. The interval 266 to 273 (ILFLNKKD) is G4 motif. The G5 motif stretch occupies residues 325-330 (TCATDT).

The protein belongs to the G-alpha family. G(q) subfamily. As to quaternary structure, g proteins are composed of 3 units; alpha, beta and gamma. The alpha chain contains the guanine nucleotide binding site.

Its function is as follows. Guanine nucleotide-binding proteins (G proteins) are involved as modulators or transducers in various transmembrane signaling systems. In Homo sapiens (Human), this protein is Guanine nucleotide-binding protein subunit alpha-14 (GNA14).